A 65-amino-acid polypeptide reads, in one-letter code: Large ribosomal subunit protein bL35 (65 aa).

The interval 1–26 is disordered; the sequence is MPKMKSNKGASKRFKKTASGGFKCKQ.

Belongs to the bacterial ribosomal protein bL35 family.

The sequence is that of Large ribosomal subunit protein bL35 from Idiomarina loihiensis (strain ATCC BAA-735 / DSM 15497 / L2-TR).